Consider the following 380-residue polypeptide: Cytochrome b (380 aa).

Transmembrane regions (helical) follow at residues 33 to 53 (FGSLLGLCLVTQILTGLFLAM), 77 to 98 (WLIRNIHANGASFFFICLYLHI), 113 to 133 (WNIGVVLFLLVMMTAFVGYVL), and 178 to 198 (FFAFHFLFPFIIVALTVLHFF). Heme b is bound by residues His-83 and His-97. Residues His-182 and His-196 each coordinate heme b. His-201 contributes to the a ubiquinone binding site. The next 4 helical transmembrane spans lie at 226-246 (YKDLFGLVLLLLALSSLSFFS), 288-308 (LGGVLALLASILILMLVPILH), 320-340 (LTQLLFWILVADVMILTWIGG), and 347-367 (FIAVGQIASVLYFTLFLILIP).

It belongs to the cytochrome b family. In terms of assembly, the cytochrome bc1 complex contains 3 respiratory subunits (MT-CYB, CYC1 and UQCRFS1), 2 core proteins (UQCRC1 and UQCRC2) and probably 6 low-molecular weight proteins. Heme b is required as a cofactor.

The protein resides in the mitochondrion inner membrane. In terms of biological role, component of the ubiquinol-cytochrome c reductase complex (complex III or cytochrome b-c1 complex) that is part of the mitochondrial respiratory chain. The b-c1 complex mediates electron transfer from ubiquinol to cytochrome c. Contributes to the generation of a proton gradient across the mitochondrial membrane that is then used for ATP synthesis. This is Cytochrome b (mt-cyb) from Zenopsis nebulosa (Mirror dory).